Reading from the N-terminus, the 161-residue chain is Regulator of ribonuclease activity A (161 aa).

It belongs to the RraA family. As to quaternary structure, homotrimer. Binds to both RNA-binding sites in the C-terminal region of Rne and to RhlB.

The protein localises to the cytoplasm. Its function is as follows. Globally modulates RNA abundance by binding to RNase E (Rne) and regulating its endonucleolytic activity. Can modulate Rne action in a substrate-dependent manner by altering the composition of the degradosome. Modulates RNA-binding and helicase activities of the degradosome. The protein is Regulator of ribonuclease activity A of Escherichia fergusonii (strain ATCC 35469 / DSM 13698 / CCUG 18766 / IAM 14443 / JCM 21226 / LMG 7866 / NBRC 102419 / NCTC 12128 / CDC 0568-73).